A 304-amino-acid chain; its full sequence is MASNLPVRSFSEVCCAEARAAIIQMENNPDETVCNRIWKIHRDLQSSDLTTTVQVMMVYRFISKRVPEGCFAILSGVNTGMYNPRELKRSYVQSLSSGTSCEFLRSLDKLAKNLLAVHVCSDVKMSLNKRQVIDFISGEEDPTLHTAEHLTSLALDDSPSAVVYSGWQQEAIKLHNTIRKIATMRPADCKAGKFYSDILSACDQTKELLDAFDQGKLAYDRDVVLIGWMDEIIKIFSKPDYLEAKGVSYQVLKNVSNKVALLRESIWWVTELDGREYLFFDESWYLHGMSAFSDGVPGYEDFIY.

Blocks host IRF3 and IRF7, thereby inhibiting IFN-beta expression and activation of host antiviral state. The protein is Protein ML of Thogoto virus (isolate SiAr 126) (Tho).